The chain runs to 442 residues: Probable glycine dehydrogenase (decarboxylating) subunit 1 (442 aa).

The protein belongs to the GcvP family. N-terminal subunit subfamily. The glycine cleavage system is composed of four proteins: P, T, L and H. In this organism, the P 'protein' is a heterodimer of two subunits.

The catalysed reaction is N(6)-[(R)-lipoyl]-L-lysyl-[glycine-cleavage complex H protein] + glycine + H(+) = N(6)-[(R)-S(8)-aminomethyldihydrolipoyl]-L-lysyl-[glycine-cleavage complex H protein] + CO2. Its function is as follows. The glycine cleavage system catalyzes the degradation of glycine. The P protein binds the alpha-amino group of glycine through its pyridoxal phosphate cofactor; CO(2) is released and the remaining methylamine moiety is then transferred to the lipoamide cofactor of the H protein. The polypeptide is Probable glycine dehydrogenase (decarboxylating) subunit 1 (Phenylobacterium zucineum (strain HLK1)).